Consider the following 462-residue polypeptide: ATP synthase subunit beta (462 aa).

151–158 (GGAGVGKT) lines the ATP pocket.

This sequence belongs to the ATPase alpha/beta chains family. In terms of assembly, F-type ATPases have 2 components, CF(1) - the catalytic core - and CF(0) - the membrane proton channel. CF(1) has five subunits: alpha(3), beta(3), gamma(1), delta(1), epsilon(1). CF(0) has three main subunits: a(1), b(2) and c(9-12). The alpha and beta chains form an alternating ring which encloses part of the gamma chain. CF(1) is attached to CF(0) by a central stalk formed by the gamma and epsilon chains, while a peripheral stalk is formed by the delta and b chains.

The protein resides in the cell inner membrane. The catalysed reaction is ATP + H2O + 4 H(+)(in) = ADP + phosphate + 5 H(+)(out). Its function is as follows. Produces ATP from ADP in the presence of a proton gradient across the membrane. The catalytic sites are hosted primarily by the beta subunits. The chain is ATP synthase subunit beta from Chlorobium limicola.